Consider the following 264-residue polypeptide: Accessory gland-specific peptide 26Aa (264 aa).

An N-terminal signal peptide occupies residues 1 to 18 (MNQILLCSPILLLLFTVA). The interval 1–138 (MNQILLCSPI…LQQRLLTEQN (138 aa)) is sufficient for promoting ovulation when expressed in females. Residues N88, N122, N138, and N145 are each glycosylated (N-linked (GlcNAc...) asparagine). A disordered region spans residues 189–219 (LQNTRKSTKPCKKRSSKDSAPPAANQFQEAN). Positions 194 to 203 (KSTKPCKKRS) are enriched in basic residues. Positions 219–264 (NVRNTYRNKYLTLLKELSQKINNEIAKVATDVPTETNPSQGNLPTL) are necessary and sufficient for homodimerization.

In terms of assembly, homodimer. May form a homodimer. In terms of processing, glycosylation. Post-translationally, undergoes several cleavages as it is secreted and is further processed in the recipient female. The precursor molecule is proteolytically cleaved by the seminal metalloprotease Semp1 at Lys-48 to produce CP1-N and CP1-C. Cleaved at Lys-67 by Semp1 to generate CP2-N and CP2-C. Cleavage appears to take place in the mated female genital tract. In terms of processing, cleaved at Lys-117 by Semp1 to generate CP3-N and CP3-C. Cleavage appears to take place in the mated female genital tract. Produced in the male accessory glands and secreted into seminal fluid (at protein level). Detected in the main cells and secondary cells of the accessory glands of 1 day old males (at protein level). In 5 day old males, confined to the secondary cells and only reappears in the main cells after mating (at protein level). Produced in adult males 3-4 hr after eclosion, levels increase reaching a peak at day 3-5 which is maintained until at least day 10 of adulthood (at protein level). In unmated male adults, levels are maintained for the first 6 days of adulthood and then gradually decrease for at least the next 8 days. In mated females, detected in the genital tract 3 minutes after the start of mating (ASM) and is secreted into the female hemolymph via the posterior vaginal wall 5 minutes ASM (at protein level).

The protein localises to the secreted. It is found in the cytoplasm. In terms of biological role, male seminal protein which enhances ovulation in female Drosophila by stimulating the release of oocytes by the ovary following mating. Acts by increasing octopamine (OA) neuronal signaling in the female genital tract leading to the postmating relaxation of the oviduct muscles. This activation of the OA signaling pathway is likely to indirectly contribute to the mating-dependent increase in the number of OA synaptic sites in the female reproductive tract. Male seminal peptide which is able to enhance ovulation in female Drosophila. The polypeptide is Accessory gland-specific peptide 26Aa (Drosophila melanogaster (Fruit fly)).